The following is a 292-amino-acid chain: ATP synthase gamma chain (292 aa).

It belongs to the ATPase gamma chain family. F-type ATPases have 2 components, CF(1) - the catalytic core - and CF(0) - the membrane proton channel. CF(1) has five subunits: alpha(3), beta(3), gamma(1), delta(1), epsilon(1). CF(0) has three main subunits: a, b and c.

It is found in the cell inner membrane. Its function is as follows. Produces ATP from ADP in the presence of a proton gradient across the membrane. The gamma chain is believed to be important in regulating ATPase activity and the flow of protons through the CF(0) complex. The polypeptide is ATP synthase gamma chain (Methylobacterium nodulans (strain LMG 21967 / CNCM I-2342 / ORS 2060)).